The following is a 181-amino-acid chain: MSFQEVWEKEPMKKPRIQKVTVNFGVGEAGDRLTIGAKVIEELTGQSPVRTLAKQTNPAFGIRKKLPIGLKVTLRGKKAEEFLKNAFTAFKACGKTLFASSFDQVGNFSFGVPEHIDFPGQKYDPSVGIYGMDICVTFEKSGYRVKSRKVKRSHIPEKHLVTKDEAIEYIQAKFDTEVVRE.

This sequence belongs to the universal ribosomal protein uL5 family. Part of the 50S ribosomal subunit; contacts the 5S rRNA and probably tRNA. Forms a bridge to the 30S subunit in the 70S ribosome.

Functionally, this is one of the proteins that bind and probably mediate the attachment of the 5S RNA into the large ribosomal subunit, where it forms part of the central protuberance. In the 70S ribosome it contacts protein S13 of the 30S subunit (bridge B1b), connecting the 2 subunits; this bridge is implicated in subunit movement. May contact the P site tRNA; the 5S rRNA and some of its associated proteins might help stabilize positioning of ribosome-bound tRNAs. In Methanococcus maripaludis (strain DSM 14266 / JCM 13030 / NBRC 101832 / S2 / LL), this protein is Large ribosomal subunit protein uL5.